The following is a 363-amino-acid chain: Protein RecA (363 aa).

78 to 85 (GPESGGKT) contributes to the ATP binding site.

Belongs to the RecA family.

It localises to the cytoplasm. Can catalyze the hydrolysis of ATP in the presence of single-stranded DNA, the ATP-dependent uptake of single-stranded DNA by duplex DNA, and the ATP-dependent hybridization of homologous single-stranded DNAs. It interacts with LexA causing its activation and leading to its autocatalytic cleavage. Probably involved in base excision repair. In terms of biological role, following severe irradiation (7 kGy of gamma irradiation) genomic DNA is fragmented. DNA is progressively degraded for the first 1.5 hours after IR, in a step promoted by RecA and counterbalanced by DNA Pol I and Pol III, followed by massive DNA synthesis and genome reassembly in the next hour. Optimal priming of DNA synthesis requires both RecA and RadA, Pol III initiates DNA synthesis while both Pol I and Pol III are required for its continuation. In the absence of RecA the majority of the chromosome is still reconstituted, via either single-strand annealing or non-homologous end joining. The polypeptide is Protein RecA (Deinococcus radiodurans (strain ATCC 13939 / DSM 20539 / JCM 16871 / CCUG 27074 / LMG 4051 / NBRC 15346 / NCIMB 9279 / VKM B-1422 / R1)).